The following is a 237-amino-acid chain: Uridylate kinase (237 aa).

Position 10 to 13 (10 to 13 (KFSG)) interacts with ATP. Residues 18–23 (GDSGFG) form an involved in allosteric activation by GTP region. Gly52 contacts UMP. Gly53 and Arg57 together coordinate ATP. UMP contacts are provided by residues Asp73 and 134–141 (TGNPFFTT). Residues Thr161, Tyr167, and Asp170 each coordinate ATP.

This sequence belongs to the UMP kinase family. Homohexamer.

The protein resides in the cytoplasm. The enzyme catalyses UMP + ATP = UDP + ADP. Its pathway is pyrimidine metabolism; CTP biosynthesis via de novo pathway; UDP from UMP (UMPK route): step 1/1. With respect to regulation, allosterically activated by GTP. Inhibited by UTP. In terms of biological role, catalyzes the reversible phosphorylation of UMP to UDP. The protein is Uridylate kinase of Campylobacter hominis (strain ATCC BAA-381 / DSM 21671 / CCUG 45161 / LMG 19568 / NCTC 13146 / CH001A).